Here is a 511-residue protein sequence, read N- to C-terminus: Cytochrome P450 26B1 (511 aa).

Cysteine 440 is a binding site for heme.

Belongs to the cytochrome P450 family. The cofactor is heme.

Its subcellular location is the endoplasmic reticulum membrane. The protein localises to the microsome membrane. The enzyme catalyses all-trans-retinoate + reduced [NADPH--hemoprotein reductase] + O2 = all-trans-4-hydroxyretinoate + oxidized [NADPH--hemoprotein reductase] + H2O + H(+). The catalysed reaction is all-trans-retinoate + reduced [NADPH--hemoprotein reductase] + O2 = all-trans-18-hydroxyretinoate + oxidized [NADPH--hemoprotein reductase] + H2O + H(+). In terms of biological role, a cytochrome P450 monooxygenase involved in the metabolism of retinoates (RAs), the active metabolites of vitamin A, and critical signaling molecules in animals. RAs exist as at least four different isomers: all-trans-RA (atRA), 9-cis-RA, 13-cis-RA, and 9,13-dicis-RA, where atRA is considered to be the biologically active isomer, although 9-cis-RA and 13-cis-RA also have activity. Catalyzes the hydroxylation of atRA primarily at C-4 and C-18, thereby contributing to the regulation of atRA homeostasis and signaling. Hydroxylation of atRA limits its biological activity and initiates a degradative process leading to its eventual elimination. Involved in the convertion of atRA to all-trans-4-oxo-RA. Can oxidize all-trans-13,14-dihydroretinoate (DRA) to metabolites which could include all-trans-4-oxo-DRA, all-trans-4-hydroxy-DRA, all-trans-5,8-epoxy-DRA, and all-trans-18-hydroxy-DRA. The polypeptide is Cytochrome P450 26B1 (cyp26b1) (Xenopus tropicalis (Western clawed frog)).